Reading from the N-terminus, the 208-residue chain is Interferon epsilon (208 aa).

An N-terminal signal peptide occupies residues 1–21 (MIIKHFFGTVLVLLASTTIFS). A disulfide bond links cysteine 53 and cysteine 163. N-linked (GlcNAc...) asparagine glycans are attached at residues asparagine 95 and asparagine 104.

This sequence belongs to the alpha/beta interferon family. Endometrium-specific.

The protein resides in the secreted. Its function is as follows. Type I interferon required for maintaining basal levels of IFN-regulated genes, including 2'-5'-oligoadenylate synthetase, IRF7 and ISG15, in the female reproductive tract. Directly mediates protection against viral and bacterial genital infections. This Homo sapiens (Human) protein is Interferon epsilon (IFNE).